The primary structure comprises 187 residues: ATP synthase subunit b 2 (187 aa).

The span at 1–12 (MAQERAEHESAD) shows a compositional bias: basic and acidic residues. The interval 1 to 31 (MAQERAEHESADQHTTSTGVPHEGQGEPFPP) is disordered. The chain crosses the membrane as a helical span at residues 40 to 60 (LLIWLAISFLLLYALMSKLVL).

This sequence belongs to the ATPase B chain family. In terms of assembly, F-type ATPases have 2 components, F(1) - the catalytic core - and F(0) - the membrane proton channel. F(1) has five subunits: alpha(3), beta(3), gamma(1), delta(1), epsilon(1). F(0) has three main subunits: a(1), b(2) and c(10-14). The alpha and beta chains form an alternating ring which encloses part of the gamma chain. F(1) is attached to F(0) by a central stalk formed by the gamma and epsilon chains, while a peripheral stalk is formed by the delta and b chains.

It is found in the cell inner membrane. Its function is as follows. F(1)F(0) ATP synthase produces ATP from ADP in the presence of a proton or sodium gradient. F-type ATPases consist of two structural domains, F(1) containing the extramembraneous catalytic core and F(0) containing the membrane proton channel, linked together by a central stalk and a peripheral stalk. During catalysis, ATP synthesis in the catalytic domain of F(1) is coupled via a rotary mechanism of the central stalk subunits to proton translocation. Functionally, component of the F(0) channel, it forms part of the peripheral stalk, linking F(1) to F(0). The b'-subunit is a diverged and duplicated form of b found in plants and photosynthetic bacteria. This Beijerinckia indica subsp. indica (strain ATCC 9039 / DSM 1715 / NCIMB 8712) protein is ATP synthase subunit b 2 (atpF2).